The following is a 158-amino-acid chain: MTHFPRHRYLLSQRAYEHRVLEEAAEILEQRYVRGETFARTENTTEYLRCKLAGYEHEIFAVLFLDNQHRLIEFKELFRGTVDAASVYPREVLKEALNVNAAAVIFAHNHPSGDPEPSQADRRITQRLKDALSLVDIRVLDHVVVGKSSVSFAERGWL.

An MPN domain is found at 37–158 (TFARTENTTE…SVSFAERGWL (122 aa)). Residues His-108, His-110, and Asp-121 each contribute to the Zn(2+) site. The short motif at 108-121 (HNHPSGDPEPSQAD) is the JAMM motif element.

The protein belongs to the UPF0758 family.

The sequence is that of UPF0758 protein VC_1786 from Vibrio cholerae serotype O1 (strain ATCC 39315 / El Tor Inaba N16961).